A 136-amino-acid chain; its full sequence is Peptide methionine sulfoxide reductase MsrB (136 aa).

The MsrB domain maps to 9-136; it reads DAEWKALLAE…NSASLDFKKK (128 aa). Zn(2+) is bound by residues Cys-53, Cys-56, Cys-102, and Cys-105. Catalysis depends on Cys-125, which acts as the Nucleophile.

The protein belongs to the MsrB Met sulfoxide reductase family. It depends on Zn(2+) as a cofactor.

The enzyme catalyses L-methionyl-[protein] + [thioredoxin]-disulfide + H2O = L-methionyl-(R)-S-oxide-[protein] + [thioredoxin]-dithiol. This chain is Peptide methionine sulfoxide reductase MsrB, found in Variovorax paradoxus (strain S110).